Consider the following 149-residue polypeptide: Large ribosomal subunit protein bL9 (149 aa).

The protein belongs to the bacterial ribosomal protein bL9 family.

Binds to the 23S rRNA. This is Large ribosomal subunit protein bL9 from Haemophilus influenzae (strain PittEE).